We begin with the raw amino-acid sequence, 703 residues long: MNPVRKTFQYGNSTVTLETGRIARQATGAVLVTMDDTVVLVTAVAEKEAVPGRDFFPLSVHYQEKTYAAGRIPGGYFKREGRPSEKETLTSRLIDRPIRPLFPDGFMNEVQIICTVMSANKDVDPDIASIIGAAAALEISGVPFQGPLAAARVGYTDEDGYLLNPGFKAIENSKLDMVVAGTEDAVLMVESEAKELTEDQMLGAVLFAHQEMQVAVQAIKEFAQEAGKPKWDWQAPEVNAELLEALKAKFAGSIGEAYGIRVKADRYAKLGELRQQAEEELAGEEEGKFEAELVKKYFSKLEKACVRQNIIKGEPRIDGRDTKTVRDLKIEVGVLPNTHGSALFTRGETQALVTATLGTMRDVLMVDALEGEKKDSFMFHYNFPPYSVGEASRVGGVGRREIGHGRLARRGVQALMPNLEEFPYAVRCVSEITESNGSSSMASVCGSSLALMDAGIPVKAPVAGIAMGLVKEGDSFAVLTDILGDEDHLGDMDFKVAGTEKGVTALQMDIKINGITDEIMEIALEQALHARLHILGEMNKVISEPRDSVADNAPKMETIKIDPDKIRDVIGKGGATIRSICEDTGASIDIDDNGTVRIYAESKLAADEAIYRITEITAEAEVGKLYRGKVERIVEFGAFVNILPGKDGLVHISQIAQERVENVTDYLKEGQEVVVKVLDIDARGRIKLSMKEVTEDEKASMAG.

2 residues coordinate Mg(2+): Asp487 and Asp493. One can recognise a KH domain in the interval 554–613 (PKMETIKIDPDKIRDVIGKGGATIRSICEDTGASIDIDDNGTVRIYAESKLAADEAIYRI). One can recognise an S1 motif domain in the interval 623–691 (GKLYRGKVER…ARGRIKLSMK (69 aa)).

The protein belongs to the polyribonucleotide nucleotidyltransferase family. Component of the RNA degradosome, which is a multiprotein complex involved in RNA processing and mRNA degradation. The cofactor is Mg(2+).

It is found in the cytoplasm. It catalyses the reaction RNA(n+1) + phosphate = RNA(n) + a ribonucleoside 5'-diphosphate. In terms of biological role, involved in mRNA degradation. Catalyzes the phosphorolysis of single-stranded polyribonucleotides processively in the 3'- to 5'-direction. The sequence is that of Polyribonucleotide nucleotidyltransferase from Hahella chejuensis (strain KCTC 2396).